We begin with the raw amino-acid sequence, 1860 residues long: Golgi-specific brefeldin A-resistance guanine nucleotide exchange factor 1 (1860 aa).

Residues 1–211 (MVDKNIYIIQ…EPKNYVGTNM (211 aa)) are DCB; DCB:DCB domain and DCB:HUS domain interaction. The segment at 1 to 381 (MVDKNIYIIQ…SVHDMDYVNP (381 aa)) is interaction with RAB1B. Disordered stretches follow at residues 215–266 (KMRA…GGMP) and 281–372 (AASA…DSAS). The segment covering 227 to 241 (WKKQKRSPRPPRHMT) has biased composition (basic residues). Polar residues-rich tracts occupy residues 250 to 262 (PTPN…SNLT), 290 to 301 (TDSGLEFSSQTT), and 335 to 351 (DLQQ…SASV). 2 positions are modified to phosphoserine: S350 and S353. T508 is subject to Phosphothreonine. Positions 531–551 (RIPSFVTELYINYDCDYYCSN) are HUS; DCB:HUS domain interaction. A compositionally biased stretch (basic and acidic residues) spans 620 to 631 (TREASNTERTAS). The interval 620 to 666 (TREASNTERTASDGKAVGMASDIPGLHLPGGGRLPPEHGKSGCSDLE) is disordered. S663 is modified (phosphoserine). The SEC7 domain occupies 693-883 (ELIEIKNKKK…EDMYHAIKNE (191 aa)). A phosphatidylinositol-phosphate binding; required for translocation to the leading edge and for ARF1 activation upon GPCR signaling region spans residues 887 to 1371 (MPEEQTGLVR…PSRPGPSPLI (485 aa)). A compositionally biased stretch (low complexity) spans 1285 to 1297 (QATARADAPDAGA). A disordered region spans residues 1285–1336 (QATARADAPDAGAQSDSELPSYHQNDVSLDRGYTSDSEVYTDHGRPGKIHRS). The segment covering 1298–1311 (QSDSELPSYHQNDV) has biased composition (polar residues). Position 1299 is a phosphoserine (S1299). Y1317 carries the phosphotyrosine modification. A phosphoserine mark is found at S1319, S1321, and S1336. The residue at position 1338 (T1338) is a Phosphothreonine; by AMPK. Disordered stretches follow at residues 1351-1371 (GKDD…SPLI), 1431-1484 (CKSQ…DEGV), and 1726-1809 (PMPM…QPPL). Residues 1433–1447 (SQEKRGKSHKYDSKG) show a composition bias toward basic and acidic residues. The span at 1465–1474 (TSSQHASRGG) shows a compositional bias: polar residues. S1476, S1774, and S1785 each carry phosphoserine. Over residues 1775–1792 (PRAASSSSPGSPVASSPS) the composition is skewed to low complexity.

In terms of assembly, can form homodimers and probably homotetramers. Interacts with COPG1; the interaction is independent of ARF1 activation. Interacts with ARF1, ARF3, ARF4 and ARF5. Interacts with RAB1B (GTP-bound form); required for GBF1 membrane association. Interacts with GGA1, GGA2 and GGA3. Interacts with USO1. Interacts (via SEC7 domain) with PNPLA2 (via C-terminus); the interaction is direct. Interacts with ARMH3. As to quaternary structure, (Microbial infection) Interacts with poliovirus protein 3A. AMPK-mediated phosphorylation at Thr-1338 is induced by 2-deoxyglucose (2-DG) and AICA ribonucleotide, and occurs during mitosis leading to membrane disassociation and inactivation of ARF1 during mitosis. In terms of tissue distribution, ubiquitous.

It is found in the golgi apparatus. It localises to the cis-Golgi network. Its subcellular location is the endoplasmic reticulum-Golgi intermediate compartment. The protein resides in the trans-Golgi network. The protein localises to the cytoplasm. It is found in the lipid droplet. It localises to the membrane. Inhibited by brefeldin A (BFA). Inhibited by golgicide A (GCA). In terms of biological role, guanine-nucleotide exchange factor (GEF) for members of the Arf family of small GTPases involved in trafficking in the early secretory pathway; its GEF activity initiates the coating of nascent vesicles via the localized generation of activated ARFs through replacement of GDP with GTP. Recruitment to cis-Golgi membranes requires membrane association of Arf-GDP and can be regulated by ARF1, ARF3, ARF4 and ARF5. Involved in the recruitment of the COPI coat complex to the endoplasmic reticulum exit sites (ERES), and the endoplasmic reticulum-Golgi intermediate (ERGIC) and cis-Golgi compartments which implicates ARF1 activation. Involved in COPI vesicle-dependent retrograde transport from the ERGIC and cis-Golgi compartments to the endoplasmic reticulum (ER). Involved in the trans-Golgi network recruitment of GGA1, GGA2, GGA3, BIG1, BIG2, and the AP-1 adaptor protein complex related to chlathrin-dependent transport; the function requires its GEF activity (probably at least in part on ARF4 and ARF5). Has GEF activity towards ARF1. Has in vitro GEF activity towards ARF5. Involved in the processing of PSAP. Required for the assembly of the Golgi apparatus. The AMPK-phosphorylated form is involved in Golgi disassembly during mitotis and under stress conditions. May be involved in the COPI vesicle-dependent recruitment of PNPLA2 to lipid droplets; however, this function is under debate. In neutrophils, involved in G protein-coupled receptor (GPCR)-mediated chemotaxis und superoxide production. Proposed to be recruited by phosphatidylinositol-phosphates generated upon GPCR stimulation to the leading edge where it recruits and activates ARF1, and is involved in recruitment of GIT2 and the NADPH oxidase complex. Plays a role in maintaining mitochondrial morphology. This is Golgi-specific brefeldin A-resistance guanine nucleotide exchange factor 1 (GBF1) from Homo sapiens (Human).